The following is a 297-amino-acid chain: UDP-N-acetylenolpyruvoylglucosamine reductase (297 aa).

Positions 27 to 192 (IGGPADALLE…LRAAYRLHPG (166 aa)) constitute an FAD-binding PCMH-type domain. The active site involves R170. S220 (proton donor) is an active-site residue. E290 is an active-site residue.

This sequence belongs to the MurB family. Requires FAD as cofactor.

It is found in the cytoplasm. The enzyme catalyses UDP-N-acetyl-alpha-D-muramate + NADP(+) = UDP-N-acetyl-3-O-(1-carboxyvinyl)-alpha-D-glucosamine + NADPH + H(+). It participates in cell wall biogenesis; peptidoglycan biosynthesis. In terms of biological role, cell wall formation. The sequence is that of UDP-N-acetylenolpyruvoylglucosamine reductase from Rubrobacter xylanophilus (strain DSM 9941 / JCM 11954 / NBRC 16129 / PRD-1).